Consider the following 361-residue polypeptide: Phospho-N-acetylmuramoyl-pentapeptide-transferase (361 aa).

10 helical membrane passes run 25–45 (RGILAALTALFLSLWMGPAVI), 73–93 (TMGGSLILLTVTLSVLLWGDL), 98–118 (VWLVLAVMICFGAIGWYDDWI), 139–159 (IFGLAAGLFLYYTADVPAAIT), 168–188 (IALPLAGVSFVVIAYFWIVGF), 200–220 (GLAIMPTVLVACALGVFAYAS), 237–257 (AGELIIICSAIAGAGLGFLWF), 264–284 (VFMGDIGALSLGAVLGTIAVI), 290–310 (VLVIMGGVFVIETLSVMIQVV), and 339–359 (VIVRFWIISVVLVLIGLATLK).

Belongs to the glycosyltransferase 4 family. MraY subfamily. Mg(2+) serves as cofactor.

The protein localises to the cell inner membrane. It catalyses the reaction UDP-N-acetyl-alpha-D-muramoyl-L-alanyl-gamma-D-glutamyl-meso-2,6-diaminopimeloyl-D-alanyl-D-alanine + di-trans,octa-cis-undecaprenyl phosphate = di-trans,octa-cis-undecaprenyl diphospho-N-acetyl-alpha-D-muramoyl-L-alanyl-D-glutamyl-meso-2,6-diaminopimeloyl-D-alanyl-D-alanine + UMP. It participates in cell wall biogenesis; peptidoglycan biosynthesis. Its function is as follows. Catalyzes the initial step of the lipid cycle reactions in the biosynthesis of the cell wall peptidoglycan: transfers peptidoglycan precursor phospho-MurNAc-pentapeptide from UDP-MurNAc-pentapeptide onto the lipid carrier undecaprenyl phosphate, yielding undecaprenyl-pyrophosphoryl-MurNAc-pentapeptide, known as lipid I. The chain is Phospho-N-acetylmuramoyl-pentapeptide-transferase from Xanthomonas euvesicatoria pv. vesicatoria (strain 85-10) (Xanthomonas campestris pv. vesicatoria).